The primary structure comprises 125 residues: Large ribosomal subunit protein bL12 (125 aa).

It belongs to the bacterial ribosomal protein bL12 family. Homodimer. Part of the ribosomal stalk of the 50S ribosomal subunit. Forms a multimeric L10(L12)X complex, where L10 forms an elongated spine to which 2 to 4 L12 dimers bind in a sequential fashion. Binds GTP-bound translation factors.

Functionally, forms part of the ribosomal stalk which helps the ribosome interact with GTP-bound translation factors. Is thus essential for accurate translation. This chain is Large ribosomal subunit protein bL12, found in Chelativorans sp. (strain BNC1).